Here is a 481-residue protein sequence, read N- to C-terminus: MSAADHLMTVHLVSMGCARNDVDSEELAARMEAGGFRLVDDPAEAETVVVNTCGFIEQAKKDSVDTLLAAADLKGNGITTSVVAVGCMAERYGRELAESLPEADAVLGFDDYGDIAGRLRTILDGGSLETHVPRDRRTLLPISPVDRPTARAEVSVPGHGTAPDLSASVTPDSGPRATRRRLGTGPSAPLKMASGCDRRCAFCAIPRFRGSYLSRPIAEIVEEARWLVDHGVKEVFLVSENSSSYGKDLGDLRLLEKLLVNLDQVDGLEWIRVSYLQPAELRPGLIDTILATDKVVPYFDLSFQHASGPLLRRMRRFGDAESFLNIIDSIRSRCPEAGLRSNFITGFPGETDADVAVLADFLQRARLDVAGVFAYSDEEGTEAAGLDGHVDEDVVTARREDLADLTDELVSQRAEDRIGTRGRVMVEEIDEAVIGRAEHQGPEVDGCVTLVDAAAVSVGDIVDVEFVGSDGVDLVARPANA.

Positions 8 to 124 constitute an MTTase N-terminal domain; that stretch reads MTVHLVSMGC…IAGRLRTILD (117 aa). [4Fe-4S] cluster-binding residues include Cys-17, Cys-53, and Cys-87. The interval 148-188 is disordered; sequence PTARAEVSVPGHGTAPDLSASVTPDSGPRATRRRLGTGPSA. In terms of domain architecture, Radical SAM core spans 182–413; it reads LGTGPSAPLK…DLTDELVSQR (232 aa). Residues Cys-196, Cys-200, and Cys-203 each contribute to the [4Fe-4S] cluster site. A TRAM domain is found at 415 to 480; the sequence is EDRIGTRGRV…GVDLVARPAN (66 aa).

Belongs to the methylthiotransferase family. RimO subfamily. The cofactor is [4Fe-4S] cluster.

The protein localises to the cytoplasm. It carries out the reaction L-aspartate(89)-[ribosomal protein uS12]-hydrogen + (sulfur carrier)-SH + AH2 + 2 S-adenosyl-L-methionine = 3-methylsulfanyl-L-aspartate(89)-[ribosomal protein uS12]-hydrogen + (sulfur carrier)-H + 5'-deoxyadenosine + L-methionine + A + S-adenosyl-L-homocysteine + 2 H(+). Functionally, catalyzes the methylthiolation of an aspartic acid residue of ribosomal protein uS12. This Cutibacterium acnes (strain DSM 16379 / KPA171202) (Propionibacterium acnes) protein is Ribosomal protein uS12 methylthiotransferase RimO.